The following is a 185-amino-acid chain: Ribosome-recycling factor (185 aa).

This sequence belongs to the RRF family.

It localises to the cytoplasm. Responsible for the release of ribosomes from messenger RNA at the termination of protein biosynthesis. May increase the efficiency of translation by recycling ribosomes from one round of translation to another. The chain is Ribosome-recycling factor from Halothermothrix orenii (strain H 168 / OCM 544 / DSM 9562).